Consider the following 121-residue polypeptide: MSAQTGSTNVSADKGKGKSVAEPQDVTMGEGEDSSSEDDVRSQGLKTAAREHYLTTYIAEEVEEEASDNEIDKSNIIQGRRTRGKKIDFAAAAKDLPAEDDEDEDDDFQSEGEDDDEMGGN.

Residues 1–11 show a composition bias toward polar residues; sequence MSAQTGSTNVS. Disordered regions lie at residues 1–45 and 62–121; these read MSAQ…SQGL and VEEE…MGGN. The segment covering 98 to 121 has biased composition (acidic residues); that stretch reads AEDDEDEDDDFQSEGEDDDEMGGN.

The protein belongs to the CHZ1 family. In terms of assembly, forms a heterotrimer with H2A.Z-H2B, stabilizing the association of the histone dimer. Also, with a lower affinity, forms a heterotrimer with H2A-H2B.

The protein localises to the nucleus. Forms a chaperone-bound H2A.Z-H2B complex that acts as a source for SWR1 complex-dependent H2A to H2A.Z histone replacement in chromatin. This is Histone H2A.Z-specific chaperone chz1 (chz1) from Sclerotinia sclerotiorum (strain ATCC 18683 / 1980 / Ss-1) (White mold).